A 111-amino-acid chain; its full sequence is Translation initiation factor 1A (111 aa).

The region spanning 12–86 (GEMPLPSEDE…KKGEVVYRYL (75 aa)) is the S1-like domain.

This sequence belongs to the eIF-1A family.

In terms of biological role, seems to be required for maximal rate of protein biosynthesis. Enhances ribosome dissociation into subunits and stabilizes the binding of the initiator Met-tRNA(I) to 40 S ribosomal subunits. The protein is Translation initiation factor 1A (eIF1A) of Aeropyrum pernix (strain ATCC 700893 / DSM 11879 / JCM 9820 / NBRC 100138 / K1).